The following is a 295-amino-acid chain: Golgi-associated RAB2 interactor protein 1A (295 aa).

Positions 187–206 (MPNSSTETTPESSRPASSQS) are disordered. A compositionally biased stretch (low complexity) spans 190 to 206 (SSTETTPESSRPASSQS). Residues serine 220, serine 221, serine 251, and serine 255 each carry the phosphoserine modification.

It belongs to the GARIN family. As to quaternary structure, interacts (via N-terminus) with RAB2B (in GTP-bound form).

The protein resides in the golgi apparatus. Its function is as follows. RAB2B effector protein required for accurate acrosome formation and normal male fertility. The protein is Golgi-associated RAB2 interactor protein 1A (Garin1a) of Rattus norvegicus (Rat).